A 406-amino-acid polypeptide reads, in one-letter code: Probable tRNA sulfurtransferase (406 aa).

In terms of domain architecture, THUMP spans 62-167; that stretch reads AEVSNRLTKV…QDATYLSFED (106 aa). ATP-binding positions include 185–186, 210–211, Arg-267, Gly-289, and Gln-298; these read ML and HF.

Belongs to the ThiI family.

It is found in the cytoplasm. The enzyme catalyses [ThiI sulfur-carrier protein]-S-sulfanyl-L-cysteine + a uridine in tRNA + 2 reduced [2Fe-2S]-[ferredoxin] + ATP + H(+) = [ThiI sulfur-carrier protein]-L-cysteine + a 4-thiouridine in tRNA + 2 oxidized [2Fe-2S]-[ferredoxin] + AMP + diphosphate. The catalysed reaction is [ThiS sulfur-carrier protein]-C-terminal Gly-Gly-AMP + S-sulfanyl-L-cysteinyl-[cysteine desulfurase] + AH2 = [ThiS sulfur-carrier protein]-C-terminal-Gly-aminoethanethioate + L-cysteinyl-[cysteine desulfurase] + A + AMP + 2 H(+). It functions in the pathway cofactor biosynthesis; thiamine diphosphate biosynthesis. Functionally, catalyzes the ATP-dependent transfer of a sulfur to tRNA to produce 4-thiouridine in position 8 of tRNAs, which functions as a near-UV photosensor. Also catalyzes the transfer of sulfur to the sulfur carrier protein ThiS, forming ThiS-thiocarboxylate. This is a step in the synthesis of thiazole, in the thiamine biosynthesis pathway. The sulfur is donated as persulfide by IscS. This chain is Probable tRNA sulfurtransferase, found in Lactococcus lactis subsp. cremoris (strain MG1363).